The following is a 146-amino-acid chain: NADH-quinone oxidoreductase subunit A (146 aa).

3 consecutive transmembrane segments (helical) span residues 14 to 34 (FGLFLIIAVGLCVFMLTGGFL), 68 to 88 (LVAMFFVIFDVEALYLYAWAV), and 96 to 116 (IGFIEATIFILVLLAGLIYLV).

This sequence belongs to the complex I subunit 3 family. In terms of assembly, NDH-1 is composed of 13 different subunits. Subunits NuoA, H, J, K, L, M, N constitute the membrane sector of the complex.

Its subcellular location is the cell inner membrane. It catalyses the reaction a quinone + NADH + 5 H(+)(in) = a quinol + NAD(+) + 4 H(+)(out). Its function is as follows. NDH-1 shuttles electrons from NADH, via FMN and iron-sulfur (Fe-S) centers, to quinones in the respiratory chain. The immediate electron acceptor for the enzyme in this species is believed to be ubiquinone. Couples the redox reaction to proton translocation (for every two electrons transferred, four hydrogen ions are translocated across the cytoplasmic membrane), and thus conserves the redox energy in a proton gradient. This Pectobacterium carotovorum subsp. carotovorum (Erwinia carotovora subsp. carotovora) protein is NADH-quinone oxidoreductase subunit A.